The primary structure comprises 489 residues: MSRRNSKVLYVSGEVAPFVRITALADFMASFPQTVEDEGFEARIMMPKYGIINDRKFRLHDVLRLSDIEVHLKDKVDMLDVKVTALPSSKIQTYFLYNEKYFKRHAWFPDLSTGNDARVTVEKIVFFNVGVLETLLRLGWKPDIIHCNDWHTALIPLLLKTMYASHEFFRNVKTLFSIHNAYRQGNFPLKHFQRLLPDEVCAGLHCVKDEVNLLFTGIDHVELLTTTSPRYAECLRGDTPEAFGVGKRLLERELPLHGMVNGLDARQWNPAIDKMIKKRYSTENMNGKVENRKMLLEEMKLPWRDGMPLVGFIATFDDYQGAKLLADSLEKLIAQDIQLVIIGFGDKKCEQRFQEFVVAHPEQVSVQAECSDSFLHLAIAGLDLLLMPSKVESCGMLQMSAMTYGTIPIARATGGIVETIQDHGENLGTGFLFDDYSVEGLSGRLADALRCFHDDECWPALVERAMSSDFSWHNTAEAYGQLYRNLLGK.

Arg-20 contributes to the ADP-alpha-D-glucose binding site.

Belongs to the glycosyltransferase 1 family. Bacterial/plant glycogen synthase subfamily.

The enzyme catalyses [(1-&gt;4)-alpha-D-glucosyl](n) + ADP-alpha-D-glucose = [(1-&gt;4)-alpha-D-glucosyl](n+1) + ADP + H(+). It functions in the pathway glycan biosynthesis; glycogen biosynthesis. Synthesizes alpha-1,4-glucan chains using ADP-glucose. This chain is Glycogen synthase, found in Chlorobium chlorochromatii (strain CaD3).